The primary structure comprises 175 residues: Large ribosomal subunit protein uL10 (175 aa).

The protein belongs to the universal ribosomal protein uL10 family. As to quaternary structure, part of the ribosomal stalk of the 50S ribosomal subunit. The N-terminus interacts with L11 and the large rRNA to form the base of the stalk. The C-terminus forms an elongated spine to which L12 dimers bind in a sequential fashion forming a multimeric L10(L12)X complex.

Its function is as follows. Forms part of the ribosomal stalk, playing a central role in the interaction of the ribosome with GTP-bound translation factors. The chain is Large ribosomal subunit protein uL10 from Psychrobacter sp. (strain PRwf-1).